The primary structure comprises 683 residues: Translation factor guf1, mitochondrial (683 aa).

Residues 1-43 (MRGCLQLARWLSAAPKGTAASLTRAPFVLANAPRYFTSSASRA) constitute a mitochondrion transit peptide. One can recognise a tr-type G domain in the interval 66 to 250 (ERYRNFCIVA…KIPAYGHFPV (185 aa)). Residues 75-82 (AHVDHGKS), 139-143 (DTPGH), and 193-196 (NKVD) contribute to the GTP site.

Belongs to the TRAFAC class translation factor GTPase superfamily. Classic translation factor GTPase family. LepA subfamily.

The protein localises to the mitochondrion inner membrane. It carries out the reaction GTP + H2O = GDP + phosphate + H(+). Its function is as follows. Promotes mitochondrial protein synthesis. May act as a fidelity factor of the translation reaction, by catalyzing a one-codon backward translocation of tRNAs on improperly translocated ribosomes. Binds to mitochondrial ribosomes in a GTP-dependent manner. In Aspergillus fumigatus (strain ATCC MYA-4609 / CBS 101355 / FGSC A1100 / Af293) (Neosartorya fumigata), this protein is Translation factor guf1, mitochondrial (guf1).